The chain runs to 135 residues: Large ribosomal subunit protein mL54 (135 aa).

A mitochondrion-targeting transit peptide spans 1-14; that stretch reads MAAAHLLRASRVWA.

Belongs to the mitochondrion-specific ribosomal protein mL54 family. Component of the mitochondrial ribosome large subunit (39S) which comprises a 16S rRNA and about 50 distinct proteins.

It localises to the mitochondrion. In Mus musculus (Mouse), this protein is Large ribosomal subunit protein mL54 (Mrpl54).